The following is a 265-amino-acid chain: Polyphosphate glucokinase (265 aa).

Positions 1–18 are enriched in polar residues; sequence MTSTGPETSETPGATTQR. The disordered stretch occupies residues 1–22; that stretch reads MTSTGPETSETPGATTQRHGFG. 24 to 29 serves as a coordination point for ATP; that stretch reads DVGGSG.

It belongs to the ROK (NagC/XylR) family. Homodimer.

It carries out the reaction [phosphate](n) + D-glucose = [phosphate](n-1) + D-glucose 6-phosphate + H(+). It catalyses the reaction D-glucose + ATP = D-glucose 6-phosphate + ADP + H(+). Functionally, catalyzes the phosphorylation of glucose using polyphosphate or ATP as the phosphoryl donor. Polyphosphate, rather than ATP, seems to be the major phosphate donor for the enzyme in M.tuberculosis. GTP, UTP and CTP can replace ATP as phosphoryl donor. The protein is Polyphosphate glucokinase (ppgK) of Mycobacterium tuberculosis (strain ATCC 25177 / H37Ra).